The primary structure comprises 322 residues: Replication factor C small subunit (322 aa).

46–53 provides a ligand contact to ATP; the sequence is GSAGIGKT.

The protein belongs to the activator 1 small subunits family. RfcS subfamily. In terms of assembly, heteromultimer composed of small subunits (RfcS) and large subunits (RfcL).

Functionally, part of the RFC clamp loader complex which loads the PCNA sliding clamp onto DNA. This is Replication factor C small subunit from Methanoculleus marisnigri (strain ATCC 35101 / DSM 1498 / JR1).